Reading from the N-terminus, the 239-residue chain is Dephospho-CoA kinase (239 aa).

A DPCK domain is found at 3–206; sequence IIGLTGSIAS…GGEGGEPAAG (204 aa). Position 11–16 (11–16) interacts with ATP; the sequence is ASGKST. A disordered region spans residues 197 to 239; sequence GGEGGEPAAGSSAHHGAGSVDPGAGPCDGPGAAPEAERRGGDR. Positions 204–230 are enriched in low complexity; that stretch reads AAGSSAHHGAGSVDPGAGPCDGPGAAP.

Belongs to the CoaE family.

It localises to the cytoplasm. The enzyme catalyses 3'-dephospho-CoA + ATP = ADP + CoA + H(+). Its pathway is cofactor biosynthesis; coenzyme A biosynthesis; CoA from (R)-pantothenate: step 5/5. Functionally, catalyzes the phosphorylation of the 3'-hydroxyl group of dephosphocoenzyme A to form coenzyme A. This Symbiobacterium thermophilum (strain DSM 24528 / JCM 14929 / IAM 14863 / T) protein is Dephospho-CoA kinase.